A 346-amino-acid polypeptide reads, in one-letter code: Biotin synthase (346 aa).

Residues 38–256 (RQVQVSTLLS…IAVARIMMPT (219 aa)) form the Radical SAM core domain. [4Fe-4S] cluster contacts are provided by C53, C57, and C60. [2Fe-2S] cluster-binding residues include C97, C128, C188, and R260.

The protein belongs to the radical SAM superfamily. Biotin synthase family. In terms of assembly, homodimer. The cofactor is [4Fe-4S] cluster. [2Fe-2S] cluster serves as cofactor.

The enzyme catalyses (4R,5S)-dethiobiotin + (sulfur carrier)-SH + 2 reduced [2Fe-2S]-[ferredoxin] + 2 S-adenosyl-L-methionine = (sulfur carrier)-H + biotin + 2 5'-deoxyadenosine + 2 L-methionine + 2 oxidized [2Fe-2S]-[ferredoxin]. It participates in cofactor biosynthesis; biotin biosynthesis; biotin from 7,8-diaminononanoate: step 2/2. Its function is as follows. Catalyzes the conversion of dethiobiotin (DTB) to biotin by the insertion of a sulfur atom into dethiobiotin via a radical-based mechanism. This is Biotin synthase from Escherichia coli (strain K12 / DH10B).